A 147-amino-acid chain; its full sequence is 3-dehydroquinate dehydratase (147 aa).

Y24 functions as the Proton acceptor in the catalytic mechanism. Residues N74, H80, and D87 each coordinate substrate. H100 functions as the Proton donor in the catalytic mechanism. Residues 101-102 (LS) and R111 contribute to the substrate site.

This sequence belongs to the type-II 3-dehydroquinase family. As to quaternary structure, homododecamer.

The enzyme catalyses 3-dehydroquinate = 3-dehydroshikimate + H2O. Its pathway is metabolic intermediate biosynthesis; chorismate biosynthesis; chorismate from D-erythrose 4-phosphate and phosphoenolpyruvate: step 3/7. In terms of biological role, catalyzes a trans-dehydration via an enolate intermediate. The chain is 3-dehydroquinate dehydratase from Azorhizobium caulinodans (strain ATCC 43989 / DSM 5975 / JCM 20966 / LMG 6465 / NBRC 14845 / NCIMB 13405 / ORS 571).